Here is a 257-residue protein sequence, read N- to C-terminus: NAD-capped RNA hydrolase NudC (257 aa).

Positions 25 and 69 each coordinate substrate. Zn(2+) is bound by residues Cys-98 and Cys-101. Glu-111 lines the substrate pocket. Zn(2+) is bound by residues Cys-116 and Cys-119. Tyr-124 contributes to the substrate binding site. In terms of domain architecture, Nudix hydrolase spans 125–248 (PQIAPCIIVA…TVARRLIEDT (124 aa)). Residues Ala-158, Glu-174, and Glu-178 each contribute to the a divalent metal cation site. A Nudix box motif is present at residues 159-180 (GFVEVGETLEQAVAREVMEESG). 192–199 (QPWPFPQS) serves as a coordination point for substrate. A divalent metal cation is bound at residue Glu-219. A substrate-binding site is contributed by Ala-241.

Belongs to the Nudix hydrolase family. NudC subfamily. Homodimer. Mg(2+) serves as cofactor. Requires Mn(2+) as cofactor. The cofactor is Zn(2+).

The enzyme catalyses a 5'-end NAD(+)-phospho-ribonucleoside in mRNA + H2O = a 5'-end phospho-adenosine-phospho-ribonucleoside in mRNA + beta-nicotinamide D-ribonucleotide + 2 H(+). It carries out the reaction NAD(+) + H2O = beta-nicotinamide D-ribonucleotide + AMP + 2 H(+). The catalysed reaction is NADH + H2O = reduced beta-nicotinamide D-ribonucleotide + AMP + 2 H(+). In terms of biological role, mRNA decapping enzyme that specifically removes the nicotinamide adenine dinucleotide (NAD) cap from a subset of mRNAs by hydrolyzing the diphosphate linkage to produce nicotinamide mononucleotide (NMN) and 5' monophosphate mRNA. The NAD-cap is present at the 5'-end of some mRNAs and stabilizes RNA against 5'-processing. Has preference for mRNAs with a 5'-end purine. Catalyzes the hydrolysis of a broad range of dinucleotide pyrophosphates. The sequence is that of NAD-capped RNA hydrolase NudC from Shigella flexneri.